A 528-amino-acid chain; its full sequence is UDP-glucuronosyltransferase 2B19 (528 aa).

An N-terminal signal peptide occupies residues 1 to 21 (MSMKWTSALLLIQLSCYLSFG). N6-succinyllysine is present on lysine 135. An N-linked (GlcNAc...) asparagine glycan is attached at asparagine 315. Residues 493-513 (VIGFLLACVATVIFIITKCLF) form a helical membrane-spanning segment.

Belongs to the UDP-glycosyltransferase family. Expressed in liver, ovary, prostate, colon, kidney, pancreas, brain, cerebellum, mammary gland and epididymis. Not expressed in small intestine, spleen, bladder, adrenal gland and testis.

The protein localises to the microsome membrane. It localises to the endoplasmic reticulum membrane. The catalysed reaction is glucuronate acceptor + UDP-alpha-D-glucuronate = acceptor beta-D-glucuronoside + UDP + H(+). UDPGT is of major importance in the conjugation and subsequent elimination of potentially toxic xenobiotics and endogenous compounds. This isozyme displays activity toward several classes of xenobiotic substrates: eugenol, 4-methyllumbelliferone, p-nitrophenol, 1-naphthol, p,p'-biphenol, naringenin and o,o'-biphenol. Active also on 3a-hydroxy and 17b-hydroxy positions of steroids. Its function is as follows. Contributes to the formation of androgen glucuronide in extrahepatic steroid target tissues such as the prostate. The chain is UDP-glucuronosyltransferase 2B19 (UGT2B19) from Macaca fascicularis (Crab-eating macaque).